Reading from the N-terminus, the 279-residue chain is Large ribosomal subunit protein uL2 (279 aa).

Disordered stretches follow at residues 30-59 (EKSLVRPLPKKGGRNNTGRITTRHKGGGHK) and 225-279 (VMNP…KNKR). A compositionally biased stretch (basic residues) spans 50–59 (TTRHKGGGHK). The span at 253-268 (PEGRTRRPNKESDKLI) shows a compositional bias: basic and acidic residues. Residues 269–279 (VRRRRTGKNKR) are compositionally biased toward basic residues.

Belongs to the universal ribosomal protein uL2 family. As to quaternary structure, part of the 50S ribosomal subunit. Forms a bridge to the 30S subunit in the 70S ribosome.

Its function is as follows. One of the primary rRNA binding proteins. Required for association of the 30S and 50S subunits to form the 70S ribosome, for tRNA binding and peptide bond formation. It has been suggested to have peptidyltransferase activity; this is somewhat controversial. Makes several contacts with the 16S rRNA in the 70S ribosome. This chain is Large ribosomal subunit protein uL2, found in Kocuria rhizophila (strain ATCC 9341 / DSM 348 / NBRC 103217 / DC2201).